A 278-amino-acid chain; its full sequence is Probable ribosomal RNA small subunit methyltransferase A (278 aa).

Residues Asn-23, Leu-25, Gly-50, Glu-71, Asp-95, and Asn-110 each contribute to the S-adenosyl-L-methionine site.

This sequence belongs to the class I-like SAM-binding methyltransferase superfamily. rRNA adenine N(6)-methyltransferase family. RsmA subfamily.

Its subcellular location is the cytoplasm. Specifically dimethylates two adjacent adenosines in the loop of a conserved hairpin near the 3'-end of 16S rRNA in the 30S particle. May play a critical role in biogenesis of 30S subunits. In Thermococcus gammatolerans (strain DSM 15229 / JCM 11827 / EJ3), this protein is Probable ribosomal RNA small subunit methyltransferase A.